A 126-amino-acid polypeptide reads, in one-letter code: Methylglyoxal synthase (126 aa).

The MGS-like domain occupies 1-126 (MEKKIALIAH…LIKGFEGLNT (126 aa)). Residues His-10, Lys-14, 36–39 (TGTT), and 56–57 (SG) contribute to the substrate site. Residue Asp-62 is the Proton donor/acceptor of the active site. His-89 serves as a coordination point for substrate.

This sequence belongs to the methylglyoxal synthase family.

It carries out the reaction dihydroxyacetone phosphate = methylglyoxal + phosphate. Its function is as follows. Catalyzes the formation of methylglyoxal from dihydroxyacetone phosphate. The chain is Methylglyoxal synthase from Borrelia garinii subsp. bavariensis (strain ATCC BAA-2496 / DSM 23469 / PBi) (Borreliella bavariensis).